Consider the following 643-residue polypeptide: Threonine--tRNA ligase (643 aa).

Positions Met-1–Thr-61 constitute a TGS domain. Residues Asp-243–Pro-534 are catalytic. The Zn(2+) site is built by Cys-334, His-385, and His-511.

The protein belongs to the class-II aminoacyl-tRNA synthetase family. As to quaternary structure, homodimer. Requires Zn(2+) as cofactor.

It is found in the cytoplasm. It carries out the reaction tRNA(Thr) + L-threonine + ATP = L-threonyl-tRNA(Thr) + AMP + diphosphate + H(+). In terms of biological role, catalyzes the attachment of threonine to tRNA(Thr) in a two-step reaction: L-threonine is first activated by ATP to form Thr-AMP and then transferred to the acceptor end of tRNA(Thr). Also edits incorrectly charged L-seryl-tRNA(Thr). In Haemophilus influenzae (strain 86-028NP), this protein is Threonine--tRNA ligase.